Consider the following 396-residue polypeptide: Putative N(4)-(beta-N-acetylglucosaminyl)-L-asparaginase GG24090 (396 aa).

The first 23 residues, 1 to 23, serve as a signal peptide directing secretion; the sequence is MKRHLGTCLWVLCLASTAFSSLA. 2 cysteine pairs are disulfide-bonded: cysteine 100–cysteine 105 and cysteine 199–cysteine 215. The active-site Nucleophile is threonine 246. Residues 274 to 277 and 297 to 300 each bind substrate; these read RVGD and TGDG. A disulfide bond links cysteine 357 and cysteine 384.

It belongs to the Ntn-hydrolase family. As to quaternary structure, heterotetramer of two alpha and two beta chains arranged as a dimer of alpha/beta heterodimers. In terms of processing, cleaved into an alpha and beta chain by autocatalysis; this activates the enzyme. The N-terminal residue of the beta subunit is responsible for the nucleophile hydrolase activity.

The catalysed reaction is N(4)-(beta-N-acetyl-D-glucosaminyl)-L-asparagine + H2O = N-acetyl-beta-D-glucosaminylamine + L-aspartate + H(+). Functionally, cleaves the GlcNAc-Asn bond which joins oligosaccharides to the peptide of asparagine-linked glycoproteins. The sequence is that of Putative N(4)-(beta-N-acetylglucosaminyl)-L-asparaginase GG24090 from Drosophila erecta (Fruit fly).